Reading from the N-terminus, the 628-residue chain is Biosynthetic arginine decarboxylase (628 aa).

At Lys101 the chain carries N6-(pyridoxal phosphate)lysine. Position 281–291 (281–291 (VDVGGGLGVDY)) interacts with substrate.

This sequence belongs to the Orn/Lys/Arg decarboxylase class-II family. SpeA subfamily. Mg(2+) serves as cofactor. Requires pyridoxal 5'-phosphate as cofactor.

It carries out the reaction L-arginine + H(+) = agmatine + CO2. Its pathway is amine and polyamine biosynthesis; agmatine biosynthesis; agmatine from L-arginine: step 1/1. Catalyzes the biosynthesis of agmatine from arginine. This Alkalilimnicola ehrlichii (strain ATCC BAA-1101 / DSM 17681 / MLHE-1) protein is Biosynthetic arginine decarboxylase.